Reading from the N-terminus, the 314-residue chain is Ribonuclease Z (314 aa).

Residues histidine 62, histidine 64, aspartate 66, histidine 67, histidine 144, aspartate 215, and histidine 273 each coordinate Zn(2+). Aspartate 66 serves as the catalytic Proton acceptor.

It belongs to the RNase Z family. In terms of assembly, homodimer. It depends on Zn(2+) as a cofactor.

The catalysed reaction is Endonucleolytic cleavage of RNA, removing extra 3' nucleotides from tRNA precursor, generating 3' termini of tRNAs. A 3'-hydroxy group is left at the tRNA terminus and a 5'-phosphoryl group is left at the trailer molecule.. In terms of biological role, zinc phosphodiesterase, which displays some tRNA 3'-processing endonuclease activity. Probably involved in tRNA maturation, by removing a 3'-trailer from precursor tRNA. This is Ribonuclease Z from Prochlorococcus marinus (strain NATL1A).